A 175-amino-acid chain; its full sequence is NADH-ubiquinone oxidoreductase chain 6 (175 aa).

5 consecutive transmembrane segments (helical) span residues 1–21 (MMMYIVFILSIIFVISFVGVS), 25–45 (SPIYGGLGLIVGGGVGCGVIL), 47–67 (FGGSFLGLMVFLIYLGGMLVV), 88–108 (VVLGAFVLGLVVEFLIVIYAL), and 149–169 (YGVWLVIVTGWSLFISVVIIM).

This sequence belongs to the complex I subunit 6 family. In terms of assembly, core subunit of respiratory chain NADH dehydrogenase (Complex I) which is composed of 45 different subunits.

It is found in the mitochondrion inner membrane. The enzyme catalyses a ubiquinone + NADH + 5 H(+)(in) = a ubiquinol + NAD(+) + 4 H(+)(out). Its function is as follows. Core subunit of the mitochondrial membrane respiratory chain NADH dehydrogenase (Complex I) which catalyzes electron transfer from NADH through the respiratory chain, using ubiquinone as an electron acceptor. Essential for the catalytic activity and assembly of complex I. The polypeptide is NADH-ubiquinone oxidoreductase chain 6 (MT-ND6) (Balaenoptera physalus (Fin whale)).